We begin with the raw amino-acid sequence, 215 residues long: uncharacterized protein (215 aa).

This is an uncharacterized protein from Escherichia coli (strain K12).